The primary structure comprises 433 residues: Voltage-gated potassium channel regulatory subunit KCNG3 (433 aa).

Topologically, residues 1–165 (MTFGRGGAAS…RTFEEPTSSL (165 aa)) are cytoplasmic. The chain crosses the membrane as a helical span at residues 166 to 187 (AAQILASVSVVFVIVSMVVLCA). Topologically, residues 188 to 217 (STLPDWRAAVADNRSLDDRSRYSASPGREP) are extracellular. Residues 218–239 (SGIIEAICIGWFTAECIVRFIV) form a helical membrane-spanning segment. Topologically, residues 240-250 (SKNKCEFVKRP) are cytoplasmic. The helical transmembrane segment at 251-271 (LNIIDLLAITPYYISVLMTVF) threads the bilayer. The Extracellular portion of the chain corresponds to 272–281 (TGENSQLQRA). A helical; Voltage-sensor transmembrane segment spans residues 282-302 (GVTLRVLRMMRIFWVIKLARH). The Cytoplasmic segment spans residues 303–317 (FIGLQTLGLTLKRCY). A helical membrane pass occupies residues 318–339 (REMAMLLVFICVAMAIFSALSQ). At 340–357 (LLEHGLDLETSNKDFASI) the chain is on the extracellular side. An intramembrane region (helical) is located at residues 358 to 369 (PAACWWVIISMT). Positions 370 to 375 (TVGYGD) match the Selectivity filter motif. Residues 370–377 (TVGYGDMY) lie within the membrane without spanning it. Topologically, residues 378–384 (PITVPGR) are extracellular. Residues 385–413 (ILGGVCVVSGIVLLALPITFIYHSFVQCY) form a helical membrane-spanning segment. Over 414–433 (HELKFRSARYSRSLSAEFLN) the chain is Cytoplasmic.

It belongs to the potassium channel family. G (TC 1.A.1.2) subfamily. Kv6.3/KCNG3 sub-subfamily. As to quaternary structure, heterotetramer with KCNB1. Does not form homomultimers.

The protein resides in the cell membrane. It localises to the cytoplasm. Functionally, regulatory subunit of the voltage-gated potassium (Kv) channel which, when coassembled with KCNB1, modulates the kinetics parameters of the heterotetrameric channel namely the inactivation and deactivation rate. Potassium channel subunit that does not form functional channels by itself. Reduces the deactivation rate. Moderately acceleratee activation. The protein is Voltage-gated potassium channel regulatory subunit KCNG3 of Mus musculus (Mouse).